We begin with the raw amino-acid sequence, 144 residues long: 3-dehydroquinate dehydratase (144 aa).

Catalysis depends on tyrosine 22, which acts as the Proton acceptor. Substrate-binding residues include asparagine 73, histidine 79, and aspartate 86. Histidine 99 acts as the Proton donor in catalysis. Residues isoleucine 100 to serine 101 and arginine 110 each bind substrate.

Belongs to the type-II 3-dehydroquinase family. In terms of assembly, homododecamer.

It catalyses the reaction 3-dehydroquinate = 3-dehydroshikimate + H2O. The protein operates within metabolic intermediate biosynthesis; chorismate biosynthesis; chorismate from D-erythrose 4-phosphate and phosphoenolpyruvate: step 3/7. Its function is as follows. Catalyzes a trans-dehydration via an enolate intermediate. In Clostridium acetobutylicum (strain ATCC 824 / DSM 792 / JCM 1419 / IAM 19013 / LMG 5710 / NBRC 13948 / NRRL B-527 / VKM B-1787 / 2291 / W), this protein is 3-dehydroquinate dehydratase.